Consider the following 138-residue polypeptide: MRTLGLDLGTKTLGVAVSDEFGWTAQGLETIAIDEERGHYGFERLRAIIDEYGVDTIVVGWPKNMNGTLGPRAEASERFAAKLREEFSLPVVLWDERLSTMAAERMLIAADVSRKKRRKVIDKMAAAVILQSYLDSKR.

Belongs to the YqgF nuclease family.

Its subcellular location is the cytoplasm. Could be a nuclease involved in processing of the 5'-end of pre-16S rRNA. In Geobacillus thermodenitrificans (strain NG80-2), this protein is Putative pre-16S rRNA nuclease.